The primary structure comprises 410 residues: Cytochrome P450(BM-1) (410 aa).

C356 provides a ligand contact to heme.

The protein belongs to the cytochrome P450 family. The cofactor is heme.

The protein resides in the cytoplasm. In terms of biological role, cytochromes P450 are a group of heme-thiolate monooxygenases. They oxidize a variety of structurally unrelated compounds, including steroids, fatty acids, and xenobiotics. The polypeptide is Cytochrome P450(BM-1) (cyp106) (Priestia megaterium (strain ATCC 14581 / DSM 32 / CCUG 1817 / JCM 2506 / NBRC 15308 / NCIMB 9376 / NCTC 10342 / NRRL B-14308 / VKM B-512 / Ford 19) (Bacillus megaterium)).